The primary structure comprises 208 residues: Endo-1,4-beta-xylanase B (208 aa).

A signal peptide spans 1-16 (MKVTAAFAGLLATTLA). Residues 17–207 (APATELVTRS…GTGTASVTVS (191 aa)) form the GH11 domain. The Nucleophile role is filled by glutamate 101. Glutamate 194 (proton donor) is an active-site residue.

It belongs to the glycosyl hydrolase 11 (cellulase G) family.

The protein localises to the secreted. The enzyme catalyses Endohydrolysis of (1-&gt;4)-beta-D-xylosidic linkages in xylans.. Its pathway is glycan degradation; xylan degradation. Its activity is regulated as follows. N-bromosuccinimide completely inhibits the catalytic activity. Endo-1,4-beta-xylanase involved in the hydrolysis of xylan, a major structural heterogeneous polysaccharide found in plant biomass representing the second most abundant polysaccharide in the biosphere, after cellulose. The polypeptide is Endo-1,4-beta-xylanase B (xynB) (Talaromyces purpureogenus (Soft rot fungus)).